Consider the following 137-residue polypeptide: NADPH-dependent 7-cyano-7-deazaguanine reductase (137 aa).

Residue C50 is the Thioimide intermediate of the active site. The Proton donor role is filled by D57. Substrate-binding positions include 72 to 74 and 91 to 92; these read VEL and HE.

This sequence belongs to the GTP cyclohydrolase I family. QueF type 1 subfamily.

The protein localises to the cytoplasm. It carries out the reaction 7-aminomethyl-7-carbaguanine + 2 NADP(+) = 7-cyano-7-deazaguanine + 2 NADPH + 3 H(+). It functions in the pathway tRNA modification; tRNA-queuosine biosynthesis. Its function is as follows. Catalyzes the NADPH-dependent reduction of 7-cyano-7-deazaguanine (preQ0) to 7-aminomethyl-7-deazaguanine (preQ1). The protein is NADPH-dependent 7-cyano-7-deazaguanine reductase of Synechococcus sp. (strain CC9902).